Here is a 124-residue protein sequence, read N- to C-terminus: Histone H2A (124 aa).

The span at 1–18 shows a compositional bias: basic residues; sequence MSGRGKGGKVKGKAKSRS. The tract at residues 1–21 is disordered; sequence MSGRGKGGKVKGKAKSRSNRA. Serine 2 is modified (N-acetylserine). Serine 2 is modified (phosphoserine). An N6-succinyllysine modification is found at lysine 36. At glutamine 104 the chain carries N5-methylglutamine. Residue lysine 119 forms a Glycyl lysine isopeptide (Lys-Gly) (interchain with G-Cter in ubiquitin) linkage. Threonine 120 is subject to Phosphothreonine.

This sequence belongs to the histone H2A family. In terms of assembly, the nucleosome is a histone octamer containing two molecules each of H2A, H2B, H3 and H4 assembled in one H3-H4 heterotetramer and two H2A-H2B heterodimers. The octamer wraps approximately 147 bp of DNA. In terms of processing, the chromatin-associated form, but not the free cytoplasmic form, is phosphorylated on Thr-120 by NHK-1 during mitosis, and dephosphorylated during S-phase. Also phosphorylated on Thr-120 by NHK-1 during prophase I of meiosis; which is required for acetylation of H3 'Lys-14' and H4 'Lys-5', diassembly of the synaptonemal complex, and karyosome formation. Post-translationally, monoubiquitination of Lys-119 by sce/dRING gives a specific tag for epigenetic transcriptional repression. Phosphorylation on Ser-2 is enhanced during mitosis. Phosphorylation on Ser-2 directly represses transcription.

The protein resides in the nucleus. Its subcellular location is the chromosome. Its function is as follows. Core component of nucleosome. Nucleosomes wrap and compact DNA into chromatin, limiting DNA accessibility to the cellular machineries which require DNA as a template. Histones thereby play a central role in transcription regulation, DNA repair, DNA replication and chromosomal stability. DNA accessibility is regulated via a complex set of post-translational modifications of histones, also called histone code, and nucleosome remodeling. The protein is Histone H2A (His2A) of Drosophila erecta (Fruit fly).